The following is a 198-amino-acid chain: Imidazoleglycerol-phosphate dehydratase (198 aa).

The protein belongs to the imidazoleglycerol-phosphate dehydratase family.

It is found in the cytoplasm. The enzyme catalyses D-erythro-1-(imidazol-4-yl)glycerol 3-phosphate = 3-(imidazol-4-yl)-2-oxopropyl phosphate + H2O. It functions in the pathway amino-acid biosynthesis; L-histidine biosynthesis; L-histidine from 5-phospho-alpha-D-ribose 1-diphosphate: step 6/9. In Streptomyces griseus subsp. griseus (strain JCM 4626 / CBS 651.72 / NBRC 13350 / KCC S-0626 / ISP 5235), this protein is Imidazoleglycerol-phosphate dehydratase.